The primary structure comprises 156 residues: ATP synthase subunit b (156 aa).

The chain crosses the membrane as a helical span at residues 5 to 25; sequence LTLIGQAIAFAVFVWFCMKFV.

Belongs to the ATPase B chain family. As to quaternary structure, F-type ATPases have 2 components, F(1) - the catalytic core - and F(0) - the membrane proton channel. F(1) has five subunits: alpha(3), beta(3), gamma(1), delta(1), epsilon(1). F(0) has three main subunits: a(1), b(2) and c(10-14). The alpha and beta chains form an alternating ring which encloses part of the gamma chain. F(1) is attached to F(0) by a central stalk formed by the gamma and epsilon chains, while a peripheral stalk is formed by the delta and b chains.

It localises to the cell inner membrane. F(1)F(0) ATP synthase produces ATP from ADP in the presence of a proton or sodium gradient. F-type ATPases consist of two structural domains, F(1) containing the extramembraneous catalytic core and F(0) containing the membrane proton channel, linked together by a central stalk and a peripheral stalk. During catalysis, ATP synthesis in the catalytic domain of F(1) is coupled via a rotary mechanism of the central stalk subunits to proton translocation. In terms of biological role, component of the F(0) channel, it forms part of the peripheral stalk, linking F(1) to F(0). The polypeptide is ATP synthase subunit b (Chromohalobacter salexigens (strain ATCC BAA-138 / DSM 3043 / CIP 106854 / NCIMB 13768 / 1H11)).